Reading from the N-terminus, the 232-residue chain is Protein UL24 homolog (232 aa).

Residues 191 to 232 (PQKELFGIHKPENSEVETVGATKSTRKGAEKSRLSRRSRKSN) are disordered.

This sequence belongs to the herpesviridae UL24 family.

Its subcellular location is the virion. The protein localises to the host cytoplasm. It localises to the host nucleus. The protein resides in the host nucleolus. It is found in the host Golgi apparatus. In terms of biological role, may participate in nuclear egress of viral particles. Plays a role in the dispersal of several host nucleolar proteins including NCL/nucleolin and NPM1. Since deletion of host NCL/nucleolin negatively impact on nuclear egress, UL24 supposedly acts on this process through its effect on host nucleoli. This chain is Protein UL24 homolog, found in Elephas maximus (Indian elephant).